Reading from the N-terminus, the 119-residue chain is Chorion class CA protein ERA.1 (119 aa).

The N-terminal stretch at 1–21 (MSTFAVLLLCVQACLIQNVYS) is a signal peptide. The left arm stretch occupies residues 22 to 55 (QCLGRVGPGGPPLGPYGGPLGGPGYGPVGYGGCG). Residues 56–103 (GYGGSGIGNVAVAGELPVAGSTGVMGQVPVIGAVEFAGPACAVGSVSI) form a central domain region. Residues 104-119 (SGACGPTCGCGGSPYY) form a right arm region.

It belongs to the chorion protein family.

This protein is one of many from the eggshell of the silk moth. This is Chorion class CA protein ERA.1 (ERA.1) from Bombyx mori (Silk moth).